A 289-amino-acid chain; its full sequence is (3R)-3-[(carboxymethyl)amino]fatty acid oxygenase/decarboxylase (289 aa).

The a (3R)-3-[(carboxymethyl)amino]fatty acid site is built by Y65, Y70, and G93. The Fe(2+) site is built by H97 and D99. The a (3R)-3-[(carboxymethyl)amino]fatty acid site is built by Y100 and K158. H260 provides a ligand contact to Fe(2+). H264 is a binding site for 2-oxoglutarate. An a (3R)-3-[(carboxymethyl)amino]fatty acid-binding site is contributed by R275.

This sequence belongs to the TfdA dioxygenase family. Fe(2+) serves as cofactor.

It carries out the reaction a (3R)-3-[(carboxymethyl)amino]fatty acid + 2 2-oxoglutarate + 2 O2 = a (3R)-3-isocyanyl-fatty acid + 2 succinate + 3 CO2 + 2 H2O. The catalysed reaction is a (3R)-3-[(carboxymethyl)amino]fatty acid + 2-oxoglutarate + O2 = a (3R)-3-{[carboxy(hydroxy)methyl]amino}fatty acid + succinate + CO2. It catalyses the reaction a (3R)-3-{[carboxy(hydroxy)methyl]amino}fatty acid + 2-oxoglutarate + O2 = a (3R)-3-isocyanyl-fatty acid + succinate + 2 CO2 + 2 H2O. Involved in the biosynthesis of a unique class of isonitrile lipopeptides (INLPs) that seem to play a role in metal acquisition in M.marinum. Catalyzes the conversion of (3R)-3-[(carboxymethyl)amino]fatty acids to (3R)-3-isocyanyl-fatty acids through an oxidative decarboxylation mechanism, thereby generating the isonitrile group of INLPs. The polypeptide is (3R)-3-[(carboxymethyl)amino]fatty acid oxygenase/decarboxylase (Mycobacterium marinum (strain ATCC BAA-535 / M)).